We begin with the raw amino-acid sequence, 357 residues long: Arginine kinase (357 aa).

Residue Ala2 is modified to N-acetylalanine. A Phosphagen kinase N-terminal domain is found at 9-91; sequence KLDEGFKKLE…FDPIIEDYHK (83 aa). Residue 64–68 coordinates L-arginine; the sequence is GVGVY. The region spanning 119-356 is the Phosphagen kinase C-terminal domain; it reads FVISTRVRCG…LELIKIEKEM (238 aa). Residues 122-126 and His185 contribute to the ATP site; that span reads STRVR. Glu225 lines the L-arginine pocket. Residue Arg229 participates in ATP binding. Cys271 provides a ligand contact to L-arginine. Residues 280-284 and 309-314 each bind ATP; these read RASVH and RGTRGE. L-arginine is bound at residue Glu314.

The protein belongs to the ATP:guanido phosphotransferase family.

It carries out the reaction L-arginine + ATP = N(omega)-phospho-L-arginine + ADP + H(+). The protein is Arginine kinase of Eriocheir sinensis (Chinese mitten crab).